Reading from the N-terminus, the 436-residue chain is Lactonohydrolase oryL (436 aa).

Residues methionine 1–serine 27 form the signal peptide.

The protein belongs to the SMP-30/CGR1 family.

It functions in the pathway secondary metabolite biosynthesis. Its function is as follows. Lactonohydrolase; part of the gene cluster that mediates the biosynthesis of oryzines, natural products with an unusual maleidride backbone. The two subunits of the fungal fatty acid synthase oryfasA and oryfasB probably form octenoic acid. This fatty acid is most likely activated by the acyl-CoA ligase oryP to give octenyl-CoA before the citrate synthase-like protein oryE catalyzes condensation with oxaloacetate to form tricarboxylic acid. The next steps of the pathways are conjectural, but a favorite possible route has been proposed, beginning with decarboxylation and concomitant dehydration by the decarboxylase oryM, followed by tautomerization, which may lead to the production of a diene intermediate. Reduction of this diene intermediate could give the known metabolite piliformic acid. On the pathway to oryzine B and oryzine A, however, hydroxylation of the diene by the alpha-ketoglutarate-dependent dioxygenase oryG and lactonisation by the lactonohydrolases oryH or oryL could give oryzine B directly. Finally, enoyl reduction by the dehydrogenase oryD would then convert oryzine B into oryzine A. The polypeptide is Lactonohydrolase oryL (Aspergillus oryzae (strain ATCC 42149 / RIB 40) (Yellow koji mold)).